The following is a 3678-amino-acid chain: Dystrophin (3678 aa).

The tract at residues 1–240 (MLWWEEVEDC…YITSLFQVLP (240 aa)) is actin-binding. Calponin-homology (CH) domains lie at 15 to 119 (DVQK…LHWQ) and 134 to 240 (TNSE…QVLP). The segment at 63-72 (PKEKGSTRVH) is ANK2- and ANK-3 binding. The tract at residues 313-333 (DSTQSPYPSQHLEAPRDKSLD) is disordered. 24 Spectrin repeats span residues 341 to 449 (VNLD…KLHK), 450 to 558 (VLMD…VLQD), 561 to 669 (LKWQ…QISQ), 721 to 830 (ELRK…WLEY), 832 to 936 (TNII…ELQT), 945 to 1047 (RYQE…KLEE), 1050 to 1156 (NKLR…ALKA), 1159 to 1265 (DKTV…TLEE), 1268 to 1369 (ACWH…LLEQ), 1370 to 1465 (SIQS…LFQK), 1470 to 1570 (EQRL…QLEK), 1573 to 1678 (KLSR…LLLE), 1681 to 1780 (KHME…KASI), 1781 to 1876 (PLKE…KALE), 1879 to 1981 (HQWY…TLHE), 1994 to 2103 (DVSY…RFDR), 2106 to 2210 (EKWR…RIEE), 2213 to 2318 (NVLS…ELEV), 2319 to 2416 (HLKD…LRTK), 2468 to 2570 (FNRA…QLNE), 2573 to 2679 (KDST…ALEE), 2682 to 2795 (RLLQ…HLEA), 2801 to 2923 (KRLH…RKID), and 2928 to 3033 (RLQE…QLHE). Residues 1417-1915 (SDLTSHEISL…PEPRDERKLK (499 aa)) form an interaction with SYNM region. The WW domain maps to 3048–3081 (TSVQGPWERAISPNKVPYYINHETQTTCWDHPKM). Residues 3051–3401 (QGPWERAISP…TVLEGDNMET (351 aa)) form an interaction with SYNM region. The ZZ-type; degenerate zinc finger occupies 3301-3357 (KHQAKCNICKECPIIGFRYRSLKHFNYDICQSCFFSGRVAKGHKMHYPMVEYCTPTT). The Zn(2+) site is built by cysteine 3306, cysteine 3309, cysteine 3330, and cysteine 3333. Positions 3459 to 3511 (DDEHLLIQHYCQSLNQDSPLSQPRSPAQILISLESEERGELERILADLEEENR) are binds to SNTB1. Residues serine 3476, serine 3483, and serine 3493 each carry the phosphoserine modification. Disordered regions lie at residues 3521–3547 (KQQH…QSPR) and 3596–3678 (EAKV…EDTM). 2 stretches are compositionally biased toward polar residues: residues 3600-3619 (NGTT…SSQP) and 3655-3665 (QLNNSFPSSRG). Phosphoserine occurs at positions 3605, 3606, 3610, 3616, 3617, and 3659.

In terms of assembly, interacts with SYNM. Interacts with the syntrophins SNTG1 and SNTG2. Interacts with KRT19. Component of the dystrophin-associated glycoprotein complex which is composed of three subcomplexes: a cytoplasmic complex comprised of DMD (or UTRN), DTNA and a number of syntrophins, such as SNTB1, SNTB2, SNTG1 and SNTG2, the transmembrane dystroglycan complex, and the sarcoglycan-sarcospan complex. Interacts with DAG1 (betaDAG1) with DMD; the interaction is inhibited by phosphorylation on the PPXY motif of DAG1. Interacts with SYNM; SNTA1 and SNTB1. Interacts with CMYA5. Directly interacts with ANK2 and ANK3; these interactions do not interfere with betaDAG1-binding and are necessary for proper localization in muscle cells. Identified in a dystroglycan complex that contains at least PRX, DRP2, UTRN, DMD and DAG1. Interacts with DTNB. Interacts with PGM5; the interaction is direct. Interacts with NOS1; localizes NOS1 to sarcolemma in muscle cells. As to expression, detected in quadriceps muscle and in sciatic nerve (at protein level). Expressed in the sarcolemma of the soleus muscle (at protein level). Differentially expressed during skeletal muscle, heart, and brain development. Also expressed in retina.

The protein localises to the cell membrane. It is found in the sarcolemma. Its subcellular location is the cytoplasm. It localises to the cytoskeleton. The protein resides in the postsynaptic cell membrane. Its function is as follows. Anchors the extracellular matrix to the cytoskeleton via F-actin. Ligand for dystroglycan. Component of the dystrophin-associated glycoprotein complex which accumulates at the neuromuscular junction (NMJ) and at a variety of synapses in the peripheral and central nervous systems and has a structural function in stabilizing the sarcolemma. Also implicated in signaling events and synaptic transmission. The protein is Dystrophin (Dmd) of Mus musculus (Mouse).